The following is a 208-amino-acid chain: Dual specificity protein phosphatase 22-A (208 aa).

The Tyrosine-protein phosphatase domain occupies 4 to 144 (GMNKVIDGLY…LQEFQMKQVS (141 aa)). The active-site Phosphocysteine intermediate is cysteine 88.

Belongs to the protein-tyrosine phosphatase family. Non-receptor class dual specificity subfamily.

The protein resides in the cytoplasm. It is found in the nucleus. It carries out the reaction O-phospho-L-tyrosyl-[protein] + H2O = L-tyrosyl-[protein] + phosphate. The catalysed reaction is O-phospho-L-seryl-[protein] + H2O = L-seryl-[protein] + phosphate. It catalyses the reaction O-phospho-L-threonyl-[protein] + H2O = L-threonyl-[protein] + phosphate. Functionally, activates the Jnk signaling pathway. Dephosphorylates and deactivates p38 and stress-activated protein kinase/c-Jun N-terminal kinase (SAPK/JNK). This chain is Dual specificity protein phosphatase 22-A, found in Danio rerio (Zebrafish).